An 89-amino-acid polypeptide reads, in one-letter code: Small ribosomal subunit protein uS15 (89 aa).

Residues 1 to 20 are compositionally biased toward basic and acidic residues; the sequence is MSITQERKSALIAEHARGKT. The interval 1-24 is disordered; it reads MSITQERKSALIAEHARGKTDTGS.

This sequence belongs to the universal ribosomal protein uS15 family. Part of the 30S ribosomal subunit. Forms a bridge to the 50S subunit in the 70S ribosome, contacting the 23S rRNA.

One of the primary rRNA binding proteins, it binds directly to 16S rRNA where it helps nucleate assembly of the platform of the 30S subunit by binding and bridging several RNA helices of the 16S rRNA. In terms of biological role, forms an intersubunit bridge (bridge B4) with the 23S rRNA of the 50S subunit in the ribosome. This is Small ribosomal subunit protein uS15 from Maricaulis maris (strain MCS10) (Caulobacter maris).